Reading from the N-terminus, the 449-residue chain is N-succinylarginine dihydrolase (449 aa).

Substrate contacts are provided by residues 19-28, Asn110, and 137-138; these read GGLSYGNVAS and HR. A disordered region spans residues 23–43; that stretch reads YGNVASQSNSQQASNPREAAR. Residues 27–37 show a composition bias toward low complexity; sequence ASQSNSQQASN. Glu174 is a catalytic residue. Arg214 lines the substrate pocket. Residue His250 is part of the active site. Asp252 and Asn365 together coordinate substrate. The Nucleophile role is filled by Cys371.

Belongs to the succinylarginine dihydrolase family. In terms of assembly, homodimer.

The catalysed reaction is N(2)-succinyl-L-arginine + 2 H2O + 2 H(+) = N(2)-succinyl-L-ornithine + 2 NH4(+) + CO2. Its pathway is amino-acid degradation; L-arginine degradation via AST pathway; L-glutamate and succinate from L-arginine: step 2/5. In terms of biological role, catalyzes the hydrolysis of N(2)-succinylarginine into N(2)-succinylornithine, ammonia and CO(2). This chain is N-succinylarginine dihydrolase, found in Pseudomonas putida (strain ATCC 47054 / DSM 6125 / CFBP 8728 / NCIMB 11950 / KT2440).